Reading from the N-terminus, the 478-residue chain is PTS system mannitol-specific EIICB component (478 aa).

At 1 to 29 the chain is on the cytoplasmic side; sequence MQQQEQQQGGMKVKVQRFGSYLSGMIMPN. One can recognise a PTS EIIC type-2 domain in the interval 18–347; the sequence is FGSYLSGMIM…VILKSSKASE (330 aa). A helical membrane pass occupies residues 30–51; the sequence is IGAFIAWGIITALFIPAGWFPN. Topologically, residues 52-55 are extracellular; the sequence is EQLN. Residues 56–76 traverse the membrane as a helical segment; that stretch reads TLVSPMITYLLPLLIAYTGGK. The Cytoplasmic portion of the chain corresponds to 77 to 139; it reads MIYDHRGGVV…QGFEMLINNF (63 aa). Residues 140–161 traverse the membrane as a helical segment; that stretch reads TAGIVGAALTILAFYAIGPVVL. The Extracellular portion of the chain corresponds to 162-170; that stretch reads TLNKLLAAG. A helical transmembrane segment spans residues 171–191; it reads VEVIVHANLLPVASVFVEPAK. At 192 to 278 the chain is on the cytoplasmic side; the sequence is VLFLNNAINH…ILMKPALILA (87 aa). The chain crosses the membrane as a helical span at residues 279–298; the sequence is AIAGGASGLLTFTIFNAGLV. The Extracellular segment spans residues 299 to 318; it reads AAASPGSIIALMAMTPRGGY. The chain crosses the membrane as a helical span at residues 319 to 340; it reads FGVLAGVLVAAAVSFIVSAVIL. Residues 341–478 lie on the Cytoplasmic side of the membrane; it reads KSSKASEEDL…YDELIEKLKK (138 aa). In terms of domain architecture, PTS EIIB type-2 spans 390–478; that stretch reads NKIIFACDAG…YDELIEKLKK (89 aa). Catalysis depends on Cys396, which acts as the Phosphocysteine intermediate; for EIIB activity. Cys396 is subject to Phosphocysteine; by EIIA.

Homodimer.

It is found in the cell membrane. It carries out the reaction D-mannitol(out) + N(pros)-phospho-L-histidyl-[protein] = D-mannitol 1-phosphate(in) + L-histidyl-[protein]. Its function is as follows. The phosphoenolpyruvate-dependent sugar phosphotransferase system (sugar PTS), a major carbohydrate active transport system, catalyzes the phosphorylation of incoming sugar substrates concomitantly with their translocation across the cell membrane. The enzyme II CmtAB PTS system is involved in D-mannitol transport. This is PTS system mannitol-specific EIICB component from Bacillus subtilis (strain 168).